The following is a 188-amino-acid chain: uncharacterized protein (188 aa).

The protein resides in the plastid. It localises to the cyanelle. This is an uncharacterized protein from Cyanophora paradoxa.